The primary structure comprises 155 residues: MKAIFSLYNIVSAILLLVLLAEFSTAELNHDKNRRGANMGLYAFPRVGRSDPSLANSLRDASDAAVFDGLYGDASQEDYNEADYQKRAGLVAFPRVGRSDAELRKFAHLLALQQVLDKRTGPSASSGLWFGPRLGKRSVDAKAFSDASKGQQEFN.

A signal peptide spans 1-26 (MKAIFSLYNIVSAILLLVLLAEFSTA). The propeptide occupies 27-33 (ELNHDKN). Valine amide is present on Val47. A propeptide spanning residues 50-85 (SDPSLANSLRDASDAAVFDGLYGDASQEDYNEADYQ) is cleaved from the precursor. Val96 is subject to Valine amide. Residues 99-117 (SDAELRKFAHLLALQQVLD) constitute a propeptide that is removed on maturation. Leu134 bears the Leucine amide mark. Positions 138 to 155 (SVDAKAFSDASKGQQEFN) are excised as a propeptide.

It belongs to the pyrokinin family.

Its subcellular location is the secreted. Functionally, CAP-1 and CAP-2, but not CAP-3 are ligands for the Capa receptor. CAP-1 and CAP-2 are probably components of the signal transduction pathway that leads to Malpighian tubule fluid secretion via the second messenger nitric oxide. The chain is Cardio acceleratory peptide 2b from Drosophila pseudoobscura pseudoobscura (Fruit fly).